The chain runs to 188 residues: Ribosome-recycling factor (188 aa).

This sequence belongs to the RRF family.

It localises to the cytoplasm. Functionally, responsible for the release of ribosomes from messenger RNA at the termination of protein biosynthesis. May increase the efficiency of translation by recycling ribosomes from one round of translation to another. The sequence is that of Ribosome-recycling factor from Granulibacter bethesdensis (strain ATCC BAA-1260 / CGDNIH1).